A 374-amino-acid polypeptide reads, in one-letter code: Probable dual-specificity RNA methyltransferase RlmN (374 aa).

The span at M1–K17 shows a compositional bias: basic and acidic residues. The segment at M1 to R22 is disordered. Catalysis depends on E119, which acts as the Proton acceptor. Positions S125–T360 constitute a Radical SAM core domain. The cysteines at positions 132 and 365 are disulfide-linked. [4Fe-4S] cluster-binding residues include C139, C143, and C146. S-adenosyl-L-methionine is bound by residues G190–E191, S223, S246–H248, and N322. The active-site S-methylcysteine intermediate is the C365.

It belongs to the radical SAM superfamily. RlmN family. Requires [4Fe-4S] cluster as cofactor.

Its subcellular location is the cytoplasm. It carries out the reaction adenosine(2503) in 23S rRNA + 2 reduced [2Fe-2S]-[ferredoxin] + 2 S-adenosyl-L-methionine = 2-methyladenosine(2503) in 23S rRNA + 5'-deoxyadenosine + L-methionine + 2 oxidized [2Fe-2S]-[ferredoxin] + S-adenosyl-L-homocysteine. It catalyses the reaction adenosine(37) in tRNA + 2 reduced [2Fe-2S]-[ferredoxin] + 2 S-adenosyl-L-methionine = 2-methyladenosine(37) in tRNA + 5'-deoxyadenosine + L-methionine + 2 oxidized [2Fe-2S]-[ferredoxin] + S-adenosyl-L-homocysteine. Specifically methylates position 2 of adenine 2503 in 23S rRNA and position 2 of adenine 37 in tRNAs. This chain is Probable dual-specificity RNA methyltransferase RlmN, found in Chlorobaculum tepidum (strain ATCC 49652 / DSM 12025 / NBRC 103806 / TLS) (Chlorobium tepidum).